Consider the following 226-residue polypeptide: Glutathione peroxidase 3 (226 aa).

An N-terminal signal peptide occupies residues Met1–Gly24. Residue Sec73 is part of the active site. Position 73 (Sec73) is a non-standard amino acid, selenocysteine.

Belongs to the glutathione peroxidase family. As to quaternary structure, homotetramer. As to expression, secreted in plasma.

It localises to the secreted. The enzyme catalyses 2 glutathione + H2O2 = glutathione disulfide + 2 H2O. The catalysed reaction is tert-butyl hydroperoxide + 2 glutathione = tert-butanol + glutathione disulfide + H2O. In terms of biological role, protects cells and enzymes from oxidative damage, by catalyzing the reduction of hydrogen peroxide, lipid peroxides and organic hydroperoxide, by glutathione. The protein is Glutathione peroxidase 3 of Bos taurus (Bovine).